Consider the following 165-residue polypeptide: Anterior gradient protein 3 (165 aa).

The first 20 residues, methionine 1–alanine 20, serve as a signal peptide directing secretion. A Prevents secretion from ER motif is present at residues glutamine 162–leucine 165.

The protein belongs to the AGR family. In terms of assembly, interacts with LYPD3 and DAG1 (alphaDAG1). Expressed in the ciliated cells of the airway epithelium. Not detected in the mucous cells.

The protein localises to the endoplasmic reticulum. It localises to the cytoplasm. Functionally, required for calcium-mediated regulation of ciliary beat frequency and mucociliary clearance in the airway. Might be involved in the regulation of intracellular calcium in tracheal epithelial cells. The sequence is that of Anterior gradient protein 3 from Mus musculus (Mouse).